Consider the following 229-residue polypeptide: Germin-like protein 3-6 (229 aa).

Residues 1–31 form the signal peptide; it reads MEHSFKTIAAGVVIVVLLLQQAPVLIRATDA. A disulfide bond links C38 and C53. The Cupin type-1 domain occupies 67–219; that stretch reads SKIATGGDVN…ALRVDAGVVE (153 aa). N80 and N83 each carry an N-linked (GlcNAc...) asparagine glycan. The Mn(2+) site is built by H116, H118, E123, and H165.

This sequence belongs to the germin family. As to quaternary structure, oligomer (believed to be a pentamer but probably hexamer).

Its subcellular location is the secreted. It is found in the extracellular space. The protein localises to the apoplast. May play a role in plant defense. Probably has no oxalate oxidase activity even if the active site is conserved. The sequence is that of Germin-like protein 3-6 from Oryza sativa subsp. japonica (Rice).